Here is a 485-residue protein sequence, read N- to C-terminus: Glucagon receptor (485 aa).

Residues 1–26 (MLLTQLHCPYLLLLLVVLSCLPKAPS) form the signal peptide. The Extracellular portion of the chain corresponds to 27 to 137 (AQVMDFLFEK…EIEVQKGVAK (111 aa)). 3 disulfide bridges follow: cysteine 44-cysteine 68, cysteine 59-cysteine 101, and cysteine 82-cysteine 122. Residues asparagine 47, asparagine 60, asparagine 75, and asparagine 79 are each glycosylated (N-linked (GlcNAc...) asparagine). Residues 138 to 162 (MYSSYQVMYTVGYSLSLGALLLALV) traverse the membrane as a helical segment. Over 163–174 (ILLGLRKLHCTR) the chain is Cytoplasmic. A helical transmembrane segment spans residues 175-199 (NYIHGNLFASFVLKAGSVLVIDWLL). At 200 to 226 (KTRYSQKIGDDLSVSVWLSDGAVAGCR) the chain is on the extracellular side. An intrachain disulfide couples cysteine 225 to cysteine 295. Residues 227–250 (VATVIMQYGIIANYCWLLVEGVYL) form a helical membrane-spanning segment. Residues 251–264 (YSLLSITTFSEKSF) lie on the Cytoplasmic side of the membrane. The chain crosses the membrane as a helical span at residues 265–286 (FSLYLCIGWGSPLLFVIPWVVV). The Extracellular segment spans residues 287 to 304 (KCLFENVQCWTSNDNMGF). A helical membrane pass occupies residues 305-327 (WWILRIPVLLAILINFFIFVRII). Topologically, residues 328-351 (HLLVAKLRAHQMHYADYKFRLARS) are cytoplasmic. The important for allosteric inhibitor binding stretch occupies residues 351–354 (STLT). The helical transmembrane segment at 352-370 (TLTLIPLLGVHEVVFAFVT) threads the bilayer. Over 371–382 (DEHAQGTLRSTK) the chain is Extracellular. A helical transmembrane segment spans residues 383 to 403 (LFFDLFFSSFQGLLVAVLYCF). At 404–485 (LNKEVQAELL…SLPRLADSPT (82 aa)) the chain is on the cytoplasmic side. Residues 455-485 (MSAGSSSGTGCEPSAKTSLASSLPRLADSPT) are disordered. Polar residues predominate over residues 456–475 (SAGSSSGTGCEPSAKTSLAS). Phosphoserine occurs at positions 460 and 476.

It belongs to the G-protein coupled receptor 2 family. Ligand-binding promotes phosphorylation of serine residues in the C-terminal cytoplasmic domain. Phosphorylation is important for receptor endocytosis after ligand-binding.

It localises to the cell membrane. In terms of biological role, G-protein coupled receptor for glucagon that plays a central role in the regulation of blood glucose levels and glucose homeostasis. Regulates the rate of hepatic glucose production by promoting glycogen hydrolysis and gluconeogenesis. Plays an important role in mediating the responses to fasting. Ligand binding causes a conformation change that triggers signaling via guanine nucleotide-binding proteins (G proteins) and modulates the activity of down-stream effectors, such as adenylate cyclase. Promotes activation of adenylate cyclase. Besides, plays a role in signaling via a phosphatidylinositol-calcium second messenger system. The polypeptide is Glucagon receptor (Gcgr) (Rattus norvegicus (Rat)).